The chain runs to 95 residues: uncharacterized protein (95 aa).

This is an uncharacterized protein from Bacillus anthracis.